The following is a 618-amino-acid chain: MSSKSASKLKREAKKAERLAAKGESVKPSKKNGTKNGKDKEVDGVTKDLSELSTSDPIFERSASGVLTSQPMSRDIKIDSYTLSFHGRLLIENATIELNHGQRYGLLGDNGSGKSTFLESVAARDVEYPEHIDSYLLNAEAEPSDVNAVDYIIQSAKDKVQKLEAEIEELSTADDVDDVLLESKYEELDDMDPSTFEAKAAMILHGLGFTQEMMAKPTKDMSGGWRMRVALSRALFIKPSLLLLDEPTNHLDLEAVVWLENYLAKYDKILVVTSHSQDFLNNVCTNIIDLTSKKQLVYYGGNFDIYMRTKEENETNQMKAYLKQQEEIAHIKKFIASAGTYANLVRQAKSKQKIIDKMEAAGLVEKPEPPRQFSFEFDEVRKLPPPIIAFNDVAFSYDGNLDHALYRDLSFGIDMDSRVAIVGKNGTGKSTLLNLITGLLIPIEGNVSRYSGLKMAKYSQHSADQLPYDKSPLEYIMDTYKPKFPERELQQWRSVLGKFGLSGLHQTSEIRTLSDGLKSRVVFAALALEQPHILLLDEPTNHLDITSIDALAKAINVWTGGVVLVSHDFRLIGQVSKELWEVKDKKVVKLDCSIEEYKKSMAKEVQSRDTTAKVKHLI.

A disordered region spans residues 1–45 (MSSKSASKLKREAKKAERLAAKGESVKPSKKNGTKNGKDKEVDGV). 2 stretches are compositionally biased toward basic and acidic residues: residues 14 to 27 (KKAE…ESVK) and 36 to 45 (NGKDKEVDGV). A phosphoserine mark is found at S50 and S53. T54 bears the Phosphothreonine mark. Phosphoserine is present on residues S55 and S64. 2 ABC transporter domains span residues 76-325 (IKID…LKQQ) and 388-609 (IAFN…QSRD). ATP contacts are provided by residues 108–115 (GDNGSGKS) and 423–430 (GKNGTGKS).

The protein belongs to the ABC transporter superfamily.

The protein localises to the cytoplasm. This is an uncharacterized protein from Schizosaccharomyces pombe (strain 972 / ATCC 24843) (Fission yeast).